A 229-amino-acid polypeptide reads, in one-letter code: Large ribosomal subunit protein uL1 (229 aa).

The protein belongs to the universal ribosomal protein uL1 family. In terms of assembly, part of the 50S ribosomal subunit.

In terms of biological role, binds directly to 23S rRNA. The L1 stalk is quite mobile in the ribosome, and is involved in E site tRNA release. Its function is as follows. Protein L1 is also a translational repressor protein, it controls the translation of the L11 operon by binding to its mRNA. The protein is Large ribosomal subunit protein uL1 of Haemophilus influenzae (strain PittEE).